A 756-amino-acid polypeptide reads, in one-letter code: Catalase-peroxidase (756 aa).

The first 26 residues, 1–26 (MKGKTVNKQTLAALVSALLVFNPAVA), serve as a signal peptide directing secretion. A cross-link (tryptophyl-tyrosyl-methioninium (Trp-Tyr) (with M-274)) is located at residues 126 to 248 (WHSAGTYRTL…LGATHMGLIY (123 aa)). H127 acts as the Proton acceptor in catalysis. Residues 248–274 (YVNPEGPKGVPDPLGSAKNIRTAFSRM) constitute a cross-link (tryptophyl-tyrosyl-methioninium (Tyr-Met) (with W-126)). Heme b is bound at residue H289.

The protein belongs to the peroxidase family. Peroxidase/catalase subfamily. Homodimer or homotetramer. Requires heme b as cofactor. Post-translationally, formation of the three residue Trp-Tyr-Met cross-link is important for the catalase, but not the peroxidase activity of the enzyme.

The catalysed reaction is H2O2 + AH2 = A + 2 H2O. It carries out the reaction 2 H2O2 = O2 + 2 H2O. Functionally, bifunctional enzyme with both catalase and broad-spectrum peroxidase activity. The chain is Catalase-peroxidase from Shewanella loihica (strain ATCC BAA-1088 / PV-4).